A 548-amino-acid chain; its full sequence is Glucose-6-phosphate isomerase (548 aa).

Glu353 (proton donor) is an active-site residue. Residues His384 and Lys512 contribute to the active site.

This sequence belongs to the GPI family.

Its subcellular location is the cytoplasm. The catalysed reaction is alpha-D-glucose 6-phosphate = beta-D-fructose 6-phosphate. The protein operates within carbohydrate biosynthesis; gluconeogenesis. It functions in the pathway carbohydrate degradation; glycolysis; D-glyceraldehyde 3-phosphate and glycerone phosphate from D-glucose: step 2/4. Its function is as follows. Catalyzes the reversible isomerization of glucose-6-phosphate to fructose-6-phosphate. This Pseudoalteromonas translucida (strain TAC 125) protein is Glucose-6-phosphate isomerase.